A 587-amino-acid polypeptide reads, in one-letter code: Formate--tetrahydrofolate ligase (587 aa).

Residue 73–80 (TPLGEGKS) participates in ATP binding.

Belongs to the formate--tetrahydrofolate ligase family.

It catalyses the reaction (6S)-5,6,7,8-tetrahydrofolate + formate + ATP = (6R)-10-formyltetrahydrofolate + ADP + phosphate. Its pathway is one-carbon metabolism; tetrahydrofolate interconversion. The protein is Formate--tetrahydrofolate ligase of Syntrophobacter fumaroxidans (strain DSM 10017 / MPOB).